The sequence spans 137 residues: Large ribosomal subunit protein bL17 (137 aa).

This sequence belongs to the bacterial ribosomal protein bL17 family. As to quaternary structure, part of the 50S ribosomal subunit. Contacts protein L32.

This Bradyrhizobium sp. (strain BTAi1 / ATCC BAA-1182) protein is Large ribosomal subunit protein bL17.